The following is a 243-amino-acid chain: UPF0758 protein PCC7424_2073 (243 aa).

An MPN domain is found at 112–235 (VEINDPVSAV…HQSLRTVTDL (124 aa)). H184, H186, and D197 together coordinate Zn(2+). The JAMM motif signature appears at 184-197 (HNHPSGNVAPSQED).

Belongs to the UPF0758 family.

The sequence is that of UPF0758 protein PCC7424_2073 from Gloeothece citriformis (strain PCC 7424) (Cyanothece sp. (strain PCC 7424)).